The sequence spans 200 residues: MATEAPIEATEVPPASATETVAKQPHKLERRWTFWFDNQSKPKQGAAWGSSLRKAYTFETVEEFWSLYDQIFKPSKLTANADFHLFKAGIEPKWEDPECASGGKWTVTSSRKANLETMWLETLMALVGEQFDESEEICGVVASVRRSQDKLSLWTKTASNEAIQMSIGRKWKEIIDAEKISYSFHDDSKRERSAKSRYTV.

Residues 1–22 (MATEAPIEATEVPPASATETVA) form a disordered region. Residues 44–49 (QGAAWG), Lys76, and 94–95 (WE) contribute to the mRNA site. A disulfide bridge links Cys99 with Cys138. Residues 145–150 (RRSQDK) and 189–192 (KRER) each bind mRNA.

The protein belongs to the eukaryotic initiation factor 4E family. As to quaternary structure, EIF4F is a multi-subunit complex, the composition of which varies with external and internal environmental conditions. It is composed of at least EIF4A, EIF4E and EIF4G. EIF4E is also known to interact with other partners. In higher plants two isoforms of EIF4F have been identified, named isoform EIF4F and isoform EIF(iso)4F. Isoform EIF4F has subunits p220 and p26, whereas isoform EIF(iso)4F has subunits p82 and p28. (Microbial infection) Interacts with viral genome-linked protein (VPg); this interaction is possible in susceptible hosts but impaired in resistant plants. According to the redox status, the Cys-99-Cys-138 disulfide bridge may have a role in regulating protein function by affecting its ability to bind capped mRNA. In terms of tissue distribution, expressed ubiquitously in seedlings, roots, leaves, sepals, petals, anthers and dehisced pollen, with highest levels in pollen, maturing anthers and roots. Strongly expressed in susceptible plants but not in resistant ones.

It localises to the cytoplasm. The protein resides in the nucleus. Functionally, component of the protein complex eIF4F, which is involved in the recognition of the mRNA cap, ATP-dependent unwinding of 5'-terminal secondary structure and recruitment of mRNA to the ribosome. Recognizes and binds the 7-methylguanosine-containing mRNA cap during an early step in the initiation of protein synthesis and facilitates ribosome binding by inducing the unwinding of the mRNAs secondary structures. Key component of recessive resistance to potyviruses. (Microbial infection) Susceptibility host factor required for viral infection (e.g. potato virus Y (PVY) and pepper mottle virus (PepMoV)) by recruiting viral RNAs to the host ribosomal complex via an interaction with viral genome-linked protein (VPg). The sequence is that of Eukaryotic translation initiation factor isoform 4E from Nicotiana tabacum (Common tobacco).